The sequence spans 864 residues: Mitochondrial 15S rRNA processing factor CCM1 (864 aa).

A mitochondrion-targeting transit peptide spans 1–76 (MYMARCGPKN…REFSNTLKER (76 aa)). PPR repeat units lie at residues 319 to 353 (NKQNLTTVIQFYSRKEMTKQAWNTFDTMKFLSTKH) and 356 to 390 (DICTYNTMLRICEKERNFPKALDLFQEIQDHNIKP).

This sequence belongs to the CCM1 family. In terms of assembly, binds to mitochondrial small subunit 15S rRNA.

Its subcellular location is the mitochondrion. Regulates mitochondrial small subunit maturation by controlling 15S rRNA 5'-end processing. Localizes to the 5' precursor of the 15S rRNA in a position that is subsequently occupied by mS47 in the mature yeast mtSSU. Uses structure and sequence-specific RNA recognition, binding to a single-stranded region of the precursor and specifically recognizing bases -6 to -1. The exchange of Ccm1 for mS47 is coupled to the irreversible removal of precursor rRNA that is accompanied by conformational changes of the mitoribosomal proteins uS5m and mS26. These conformational changes signal completion of 5'-end rRNA processing through protection of the mature 5'-end of the 15S rRNA and stabilization of mS47. The removal of the 5' precursor together with the dissociation of Ccm1 may be catalyzed by the 5'-3' exoribonuclease Pet127. Involved in the specific removal of group I introns in mitochondrial encoded transcripts. The chain is Mitochondrial 15S rRNA processing factor CCM1 (CCM1) from Saccharomyces cerevisiae (strain RM11-1a) (Baker's yeast).